We begin with the raw amino-acid sequence, 201 residues long: Ras-related protein Rab-1B (201 aa).

Methionine 1 carries the N-acetylmethionine modification. The GTP site is built by serine 17, glycine 18, valine 19, glycine 20, lysine 21, serine 22, cysteine 23, tyrosine 33, threonine 34, glutamate 35, serine 36, serine 39, and threonine 40. Serine 22 contacts Mg(2+). A Switch 1 motif is present at residues 30–45 (DDTYTESYISTIGVDF). Mg(2+) contacts are provided by threonine 40 and aspartate 63. The segment at 64–83 (TAGQERGRTITSSYYRGAHG) is switch 2 region; required for interaction with REP1/CHM. A Switch 2 motif is present at residues 65–80 (AGQERGRTITSSYYRG). Glycine 66, asparagine 121, lysine 122, aspartate 124, serine 151, alanine 152, and lysine 153 together coordinate GTP. The tract at residues 173–201 (MGPGAASGGERPNLKIDSTPVKQAGGGCC) is disordered. S-geranylgeranyl cysteine attachment occurs at residues cysteine 200 and cysteine 201. Cysteine 201 is modified (cysteine methyl ester).

Belongs to the small GTPase superfamily. Rab family. In terms of assembly, interacts with MICAL1 and MICAL2. Interacts (in GTP-bound form) with MICALCL, MICAL1 and MILCAL3. Interacts with GDI1; the interaction requires the GDP-bound state. Interacts with CHM/REP1; the interaction requires the GDP-bound form and is necessary for prenylation by GGTase II. Interacts with RabGAP TBC1D20. Interacts (in GDP-bound form) with lipid phosphatase MTMR6 (via GRAM domain); the interaction regulates MTMR6 recruitment to the endoplasmic reticulum-Golgi intermediate compartment. Interacts (in GDP-bound form) with lipid phosphatase MTMR7. It depends on Mg(2+) as a cofactor. Post-translationally, prenylated; by GGTase II, only after interaction of the substrate with Rab escort protein 1 (REP1).

Its subcellular location is the cytoplasm. The protein resides in the membrane. It is found in the preautophagosomal structure membrane. It localises to the perinuclear region. The enzyme catalyses GTP + H2O = GDP + phosphate + H(+). With respect to regulation, regulated by guanine nucleotide exchange factors (GEFs) which promote the exchange of bound GDP for free GTP. Regulated by GTPase activating proteins (GAPs) including TBC1D20 which increases the GTP hydrolysis activity. Inhibited by GDP dissociation inhibitors (GDIs). The small GTPases Rab are key regulators of intracellular membrane trafficking, from the formation of transport vesicles to their fusion with membranes. Rabs cycle between an inactive GDP-bound form and an active GTP-bound form that is able to recruit to membranes different set of downstream effectors directly responsible for vesicle formation, movement, tethering and fusion. Plays a role in the initial events of the autophagic vacuole development which take place at specialized regions of the endoplasmic reticulum. Regulates vesicular transport between the endoplasmic reticulum and successive Golgi compartments. Required to modulate the compacted morphology of the Golgi. Promotes the recruitment of lipid phosphatase MTMR6 to the endoplasmic reticulum-Golgi intermediate compartment. The polypeptide is Ras-related protein Rab-1B (RAB1B) (Sus scrofa (Pig)).